The following is a 171-amino-acid chain: RNA silencing suppressor p19 (171 aa).

Positions 1 to 15 are enriched in basic and acidic residues; sequence MERAIPGNDTREPAY. The segment at 1-32 is disordered; the sequence is MERAIPGNDTREPAYGERWNGGPGGSTSPFQL.

It belongs to the tombusvirus protein p19 family. Homodimer.

Functionally, viral suppressor of RNA silencing which binds specifically to silencing RNAs (siRNAs). Acts as a molecular caliper to specifically select siRNAs based on the length of the duplex region of the RNA. The protein is RNA silencing suppressor p19 of Capsicum annuum (Capsicum pepper).